The following is a 378-amino-acid chain: Quinolinate synthase (378 aa).

Residues histidine 59 and serine 80 each contribute to the iminosuccinate site. [4Fe-4S] cluster is bound at residue cysteine 125. Residues tyrosine 151 to asparagine 153 and serine 168 each bind iminosuccinate. [4Fe-4S] cluster is bound at residue cysteine 212. Iminosuccinate is bound by residues histidine 238 to glutamate 240 and threonine 255. Cysteine 309 lines the [4Fe-4S] cluster pocket.

It belongs to the quinolinate synthase family. Type 1 subfamily. It depends on [4Fe-4S] cluster as a cofactor.

It is found in the cytoplasm. The catalysed reaction is iminosuccinate + dihydroxyacetone phosphate = quinolinate + phosphate + 2 H2O + H(+). It participates in cofactor biosynthesis; NAD(+) biosynthesis; quinolinate from iminoaspartate: step 1/1. Catalyzes the condensation of iminoaspartate with dihydroxyacetone phosphate to form quinolinate. This Burkholderia pseudomallei (strain 668) protein is Quinolinate synthase.